Consider the following 345-residue polypeptide: Protein Tob1 (345 aa).

Positions R22–K39 match the Bipartite nuclear localization signal motif. The tract at residues V82 to V92 is important for nuclear localization. Residues D144–S160 show a composition bias toward low complexity. The interval D144 to S171 is disordered. The required for interaction with CPEB3 stretch occupies residues A161–K218. Residue T204 is modified to Phosphothreonine. Positions M226–L234 match the Nuclear export signal motif. The segment at G231–L267 is disordered. The span at Q237–P246 shows a compositional bias: low complexity. Residues A247–Q257 show a composition bias toward pro residues.

This sequence belongs to the BTG family. In terms of assembly, interacts with ERBB2. Interacts with CNOT7. Interacts with CPEB3 (via C-terminal RNA-binding region); recruits CNOT7 to CPEB3 to form a ternary complex required for mRNA deadenylation and decay. Interacts with CNOT8. Interacts with CPEB4. Post-translationally, phosphorylated on Ser and Thr residues. As to expression, ubiquitous.

It localises to the cytoplasm. It is found in the nucleus. In terms of biological role, anti-proliferative protein; the function is mediated by association with deadenylase subunits of the CCR4-NOT complex. Mediates CPEB3-accelerated mRNA deadenylation by binding to CPEB3 and recruiting CNOT7 which leads to target mRNA deadenylation and decay. This Homo sapiens (Human) protein is Protein Tob1 (TOB1).